The following is a 412-amino-acid chain: Light-independent protochlorophyllide reductase subunit N (412 aa).

Residues Cys-17, Cys-42, and Cys-103 each contribute to the [4Fe-4S] cluster site.

Belongs to the BchN/ChlN family. As to quaternary structure, protochlorophyllide reductase is composed of three subunits; ChlL, ChlN and ChlB. Forms a heterotetramer of two ChlB and two ChlN subunits. [4Fe-4S] cluster is required as a cofactor.

It catalyses the reaction chlorophyllide a + oxidized 2[4Fe-4S]-[ferredoxin] + 2 ADP + 2 phosphate = protochlorophyllide a + reduced 2[4Fe-4S]-[ferredoxin] + 2 ATP + 2 H2O. Its pathway is porphyrin-containing compound metabolism; chlorophyll biosynthesis (light-independent). Component of the dark-operative protochlorophyllide reductase (DPOR) that uses Mg-ATP and reduced ferredoxin to reduce ring D of protochlorophyllide (Pchlide) to form chlorophyllide a (Chlide). This reaction is light-independent. The NB-protein (ChlN-ChlB) is the catalytic component of the complex. This is Light-independent protochlorophyllide reductase subunit N from Synechococcus sp. (strain CC9902).